We begin with the raw amino-acid sequence, 660 residues long: DNA ligase (660 aa).

Residues 31 to 35, 79 to 80, and glutamate 111 contribute to the NAD(+) site; these read DKEYD and SL. Lysine 113 functions as the N6-AMP-lysine intermediate in the catalytic mechanism. NAD(+)-binding residues include arginine 134, glutamate 168, lysine 280, and lysine 304. The Zn(2+) site is built by cysteine 397, cysteine 400, cysteine 413, and cysteine 419. The BRCT domain occupies 577 to 660; it reads RQESIFSGKT…LDEAAFEALL (84 aa).

This sequence belongs to the NAD-dependent DNA ligase family. LigA subfamily. Requires Mg(2+) as cofactor. Mn(2+) is required as a cofactor.

It carries out the reaction NAD(+) + (deoxyribonucleotide)n-3'-hydroxyl + 5'-phospho-(deoxyribonucleotide)m = (deoxyribonucleotide)n+m + AMP + beta-nicotinamide D-nucleotide.. Functionally, DNA ligase that catalyzes the formation of phosphodiester linkages between 5'-phosphoryl and 3'-hydroxyl groups in double-stranded DNA using NAD as a coenzyme and as the energy source for the reaction. It is essential for DNA replication and repair of damaged DNA. The chain is DNA ligase from Alkaliphilus metalliredigens (strain QYMF).